Consider the following 387-residue polypeptide: Zinc transporter 7 (387 aa).

Topologically, residues 1–37 (MLPLSIKDDEYKPAKFNLVVKLSGWFRSILADKTSRN) are cytoplasmic. A helical membrane pass occupies residues 38-58 (LFFFLCLNLSFAFVELLYGIW). Residues 59-67 (SNSLGLISD) are Lumenal-facing. Residues 68 to 88 (SFHMFFDCTALLAGLAASVIS) form a helical membrane-spanning segment. The Cytoplasmic portion of the chain corresponds to 89–102 (RWRSNDSFSYGYVR). The chain crosses the membrane as a helical span at residues 103–123 (AEVLAGFVNGLFLIFTAFFIF). Topologically, residues 124 to 140 (SEGVERALEPPDVHHDR) are lumenal. Residues 141-161 (LLPVSIAGLLVNLVGIFVFQH) traverse the membrane as a helical segment. Residues 161–232 (HGGHGHSHGG…HDDQHCHDDH (72 aa)) form a his-rich loop region. Over 162–247 (GGHGHSHGGD…KGSSKQILQG (86 aa)) the chain is Cytoplasmic. The segment at 167–237 (SHGGDDHGHS…CHDDHTLTPG (71 aa)) is disordered. A compositionally biased stretch (basic residues) spans 187 to 201 (GHSHGGHGHSHGGHG). Composition is skewed to basic and acidic residues over residues 202 to 214 (HSHE…DHGH) and 221 to 233 (HSHD…DDHT). The helical transmembrane segment at 248 to 268 (VFLHIVADTLGSVGVIISAIL) threads the bilayer. The Lumenal segment spans residues 269–273 (MQKYD). The helical transmembrane segment at 274–294 (LMIADPICSMLIALLIGVSVV) threads the bilayer. Residues 295–387 (PLLRESIGIL…LYVQIEVAAM (93 aa)) lie on the Cytoplasmic side of the membrane.

This sequence belongs to the cation diffusion facilitator (CDF) transporter (TC 2.A.4) family. SLC30A subfamily. As to quaternary structure, homooligomer.

It localises to the golgi apparatus membrane. It is found in the cytoplasmic vesicle. The protein resides in the golgi apparatus. Its subcellular location is the trans-Golgi network. The protein localises to the sarcoplasmic reticulum. It localises to the mitochondrion. It carries out the reaction Zn(2+)(in) = Zn(2+)(out). Zinc ion transporter mediating zinc entry from the cytosol into the lumen of organelles along the secretory pathway. By contributing to zinc ion homeostasis within the early secretory pathway, regulates the activation and folding of enzymes like alkaline phosphatases. This chain is Zinc transporter 7 (slc30a7), found in Danio rerio (Zebrafish).